Reading from the N-terminus, the 255-residue chain is Probable cyclic nucleotide phosphodiesterase syc0937_d (255 aa).

The Fe cation site is built by aspartate 19, histidine 21, aspartate 59, asparagine 89, histidine 157, histidine 196, and histidine 198. AMP is bound by residues histidine 21, aspartate 59, and 89–90 (NH). AMP is bound at residue histidine 198.

The protein belongs to the cyclic nucleotide phosphodiesterase class-III family. Fe(2+) serves as cofactor.

In Synechococcus sp. (strain ATCC 27144 / PCC 6301 / SAUG 1402/1) (Anacystis nidulans), this protein is Probable cyclic nucleotide phosphodiesterase syc0937_d.